Consider the following 190-residue polypeptide: Putative manganese efflux pump MntP (190 aa).

6 consecutive transmembrane segments (helical) span residues 3-23 (PISL…AALG), 41-61 (LIFG…GQVA), 69-89 (DHWI…YNGI), 105-125 (FWIL…VGVG), 133-153 (IVVA…IGVM), and 168-188 (IIGG…HLSA).

Belongs to the MntP (TC 9.B.29) family.

It localises to the cell inner membrane. Probably functions as a manganese efflux pump. In Pseudomonas syringae pv. syringae (strain B728a), this protein is Putative manganese efflux pump MntP.